Here is a 653-residue protein sequence, read N- to C-terminus: Protein SCARECROW (653 aa).

2 disordered regions span residues 1–69 (MAES…RRVS) and 193–265 (PSSS…AVQT). The span at 17–31 (PLRTTSSGSSSSNNR) shows a compositional bias: low complexity. Residues 32-41 (GPPPPPPPPL) are compositionally biased toward pro residues. Residues 51-63 (EMSSNPDYNNSSR) show a composition bias toward polar residues. Residues 209 to 230 (QISNNPSPPQQQQQHQQQQQQH) are compositionally biased toward low complexity. Over residues 246–265 (STDAPPQPETVTATVPAVQT) the composition is skewed to polar residues. The GRAS domain maps to 281–650 (QKQDEEGLHL…LSLLTASAWT (370 aa)). The segment at 288–351 (LHLLTLLLQC…LLNSCLGIYA (64 aa)) is leucine repeat I (LRI). The LxCxE motif signature appears at 295-299 (LQCAE). The segment at 370-435 (FQVFNGISPL…GGPPHVRLTG (66 aa)) is VHIID. Residues 401–405 (VHIID) carry the VHIID motif. Positions 445-477 (ATGKRLSDFADKLGLPFEFCPLAEKVGNLDTER) are leucine repeat II (LRII). The tract at residues 486 to 573 (VAVHWLQHSL…QQLLSKEIRN (88 aa)) is PFYRE. Positions 576–650 (AVGGPSRSGE…LSLLTASAWT (75 aa)) are SAW.

It belongs to the GRAS family. As to quaternary structure, interacts with SHR, JKD and MGP. Interacts with SIEL. Interacts with RBR1 through its the LxCxE motif. As to expression, expressed in siliques, leaves and roots. Detected in the initial daughter cell before its asymmetric division and remains expressed only in the endodermal cell layer after the division. Expressed in the endodermis or starch sheath of the seedling hypocotyl, in the leaf bundle sheath cells and the root quiescent center.

The protein localises to the nucleus. In terms of biological role, transcription factor required for quiescent center cells specification and maintenance of surrounding stem cells, and for the asymmetric cell division involved in radial pattern formation in roots. Essential for cell division but not differentiation of the ground tissue. Also required for normal shoot gravitropism. Regulates the radial organization of the shoot axial organs. Binds to the promoter of MGP, NUC, RLK and SCL3. Restricts SHR movment and sequesters it into the nucleus of the endodermis. This chain is Protein SCARECROW, found in Arabidopsis thaliana (Mouse-ear cress).